The chain runs to 138 residues: Putative pre-16S rRNA nuclease (138 aa).

The protein belongs to the YqgF nuclease family.

Its subcellular location is the cytoplasm. Could be a nuclease involved in processing of the 5'-end of pre-16S rRNA. This chain is Putative pre-16S rRNA nuclease, found in Geobacillus kaustophilus (strain HTA426).